A 231-amino-acid chain; its full sequence is Ureidoacrylate amidohydrolase RutB (231 aa).

The active-site Proton acceptor is the aspartate 25. Lysine 134 is a catalytic residue. Cysteine 167 functions as the Nucleophile in the catalytic mechanism.

This sequence belongs to the isochorismatase family. RutB subfamily.

The enzyme catalyses (Z)-3-ureidoacrylate + H2O + H(+) = (Z)-3-aminoacrylate + NH4(+) + CO2. It catalyses the reaction (Z)-3-ureidoacrylate + H2O = (Z)-3-aminoacrylate + carbamate + H(+). It carries out the reaction (Z)-2-methylureidoacrylate + H2O + H(+) = (Z)-2-methylaminoacrylate + NH4(+) + CO2. Hydrolyzes ureidoacrylate to form aminoacrylate and carbamate. The carbamate hydrolyzes spontaneously, thereby releasing one of the nitrogen atoms of the pyrimidine ring as ammonia and one of its carbon atoms as CO2. In Escherichia coli O18:K1:H7 (strain IHE3034 / ExPEC), this protein is Ureidoacrylate amidohydrolase RutB.